The chain runs to 474 residues: Siroheme synthase (474 aa).

Positions 1–202 (MEYLPIFIDL…GRPKEANKVL (202 aa)) are precorrin-2 dehydrogenase /sirohydrochlorin ferrochelatase. Residues 22-23 (AV) and 41-42 (PA) each bind NAD(+). Ser126 bears the Phosphoserine mark. The segment at 218–474 (GHVTLVGAGP…YLINSIINLI (257 aa)) is uroporphyrinogen-III C-methyltransferase. Pro227 contributes to the S-adenosyl-L-methionine binding site. The active-site Proton acceptor is the Asp250. The active-site Proton donor is Lys272. S-adenosyl-L-methionine contacts are provided by residues 303-305 (GGD), Ile308, 333-334 (TA), Met385, and Gly414.

It in the N-terminal section; belongs to the precorrin-2 dehydrogenase / sirohydrochlorin ferrochelatase family. The protein in the C-terminal section; belongs to the precorrin methyltransferase family.

It carries out the reaction uroporphyrinogen III + 2 S-adenosyl-L-methionine = precorrin-2 + 2 S-adenosyl-L-homocysteine + H(+). It catalyses the reaction precorrin-2 + NAD(+) = sirohydrochlorin + NADH + 2 H(+). The enzyme catalyses siroheme + 2 H(+) = sirohydrochlorin + Fe(2+). It participates in cofactor biosynthesis; adenosylcobalamin biosynthesis; precorrin-2 from uroporphyrinogen III: step 1/1. Its pathway is cofactor biosynthesis; adenosylcobalamin biosynthesis; sirohydrochlorin from precorrin-2: step 1/1. The protein operates within porphyrin-containing compound metabolism; siroheme biosynthesis; precorrin-2 from uroporphyrinogen III: step 1/1. It functions in the pathway porphyrin-containing compound metabolism; siroheme biosynthesis; siroheme from sirohydrochlorin: step 1/1. It participates in porphyrin-containing compound metabolism; siroheme biosynthesis; sirohydrochlorin from precorrin-2: step 1/1. Functionally, multifunctional enzyme that catalyzes the SAM-dependent methylations of uroporphyrinogen III at position C-2 and C-7 to form precorrin-2 via precorrin-1. Then it catalyzes the NAD-dependent ring dehydrogenation of precorrin-2 to yield sirohydrochlorin. Finally, it catalyzes the ferrochelation of sirohydrochlorin to yield siroheme. In Blochmanniella pennsylvanica (strain BPEN), this protein is Siroheme synthase.